We begin with the raw amino-acid sequence, 210 residues long: FMN-dependent NADH:quinone oxidoreductase (210 aa).

Residues Ser9 and 15 to 17 (SHS) each bind FMN.

Belongs to the azoreductase type 1 family. In terms of assembly, homodimer. It depends on FMN as a cofactor.

The enzyme catalyses 2 a quinone + NADH + H(+) = 2 a 1,4-benzosemiquinone + NAD(+). The catalysed reaction is N,N-dimethyl-1,4-phenylenediamine + anthranilate + 2 NAD(+) = 2-(4-dimethylaminophenyl)diazenylbenzoate + 2 NADH + 2 H(+). In terms of biological role, quinone reductase that provides resistance to thiol-specific stress caused by electrophilic quinones. Also exhibits azoreductase activity. Catalyzes the reductive cleavage of the azo bond in aromatic azo compounds to the corresponding amines. This Mesorhizobium japonicum (strain LMG 29417 / CECT 9101 / MAFF 303099) (Mesorhizobium loti (strain MAFF 303099)) protein is FMN-dependent NADH:quinone oxidoreductase.